Here is a 480-residue protein sequence, read N- to C-terminus: MNAVAKTVPHTDYKIADISLADWGRKELDIAEHEMPGLMSIRRKHAQTKPLKDVRITGSLHMTIQTAVLIETLKDIGANVRWASCNIFSTQDHAAAAIAATGTPVFAWKGETLEEYWDCTLDALTFTLPDGTLTGPELVVDDGGDVTLLIHKGYELENGSTWVDEPASSHEEGVIKALLKRVAVERPGYWARVVKDWKGVSEETTTGVHRLYQIAEAGKLLIPAINVNDSVTKSKFDNLYGCRESLADGLKRAMDVMLAGKVAVVCGYGDVGKGSAASLRAYGARVIVTEIDPICALQASMEGFEVNTIESTLGRGDIYVTTTGNKDIITVEHLQAMKDQAIVCNIGHFDNEIQVDALNALKGVEKINIKPQVDKYVFGNGNAIFLLADGRLVNLGCATGHPSFVMSNSFANQTLAQIDLWEKRDSYEKKVYILPKHLDEEVARLHLEKIGVKLTTLTKDQADYLGVDVAGPYKPDHYRY.

3 residues coordinate substrate: Thr63, Asp142, and Glu203. NAD(+) is bound at residue 204–206 (TTT). Substrate is bound by residues Lys233 and Asp237. NAD(+)-binding positions include Asn238, 267-272 (GYGDVG), Glu290, Asn325, 346-348 (IGH), and Asn394.

It belongs to the adenosylhomocysteinase family. It depends on NAD(+) as a cofactor.

The protein resides in the cytoplasm. The catalysed reaction is S-adenosyl-L-homocysteine + H2O = L-homocysteine + adenosine. The protein operates within amino-acid biosynthesis; L-homocysteine biosynthesis; L-homocysteine from S-adenosyl-L-homocysteine: step 1/1. Functionally, may play a key role in the regulation of the intracellular concentration of adenosylhomocysteine. In Xanthomonas campestris pv. campestris (strain 8004), this protein is Adenosylhomocysteinase.